The following is a 254-amino-acid chain: Triosephosphate isomerase (254 aa).

Residue 12-14 coordinates substrate; the sequence is NWK. Residue histidine 99 is the Electrophile of the active site. Glutamate 169 serves as the catalytic Proton acceptor. Residues glycine 175, serine 214, and 235–236 each bind substrate; that span reads GG.

The protein belongs to the triosephosphate isomerase family. As to quaternary structure, homodimer.

Its subcellular location is the cytoplasm. The catalysed reaction is D-glyceraldehyde 3-phosphate = dihydroxyacetone phosphate. Its pathway is carbohydrate biosynthesis; gluconeogenesis. It participates in carbohydrate degradation; glycolysis; D-glyceraldehyde 3-phosphate from glycerone phosphate: step 1/1. In terms of biological role, involved in the gluconeogenesis. Catalyzes stereospecifically the conversion of dihydroxyacetone phosphate (DHAP) to D-glyceraldehyde-3-phosphate (G3P). This chain is Triosephosphate isomerase, found in Bartonella tribocorum (strain CIP 105476 / IBS 506).